Reading from the N-terminus, the 360-residue chain is Peptide chain release factor 1 (360 aa).

Position 235 is an N5-methylglutamine (glutamine 235). The tract at residues alanine 284–phenylalanine 312 is disordered.

It belongs to the prokaryotic/mitochondrial release factor family. In terms of processing, methylated by PrmC. Methylation increases the termination efficiency of RF1.

Its subcellular location is the cytoplasm. In terms of biological role, peptide chain release factor 1 directs the termination of translation in response to the peptide chain termination codons UAG and UAA. The polypeptide is Peptide chain release factor 1 (Escherichia coli O81 (strain ED1a)).